The chain runs to 277 residues: Putative pyruvate, phosphate dikinase regulatory protein (277 aa).

151–158 (GISRTSKT) is a binding site for ADP.

Belongs to the pyruvate, phosphate/water dikinase regulatory protein family. PDRP subfamily.

The enzyme catalyses N(tele)-phospho-L-histidyl/L-threonyl-[pyruvate, phosphate dikinase] + ADP = N(tele)-phospho-L-histidyl/O-phospho-L-threonyl-[pyruvate, phosphate dikinase] + AMP + H(+). It carries out the reaction N(tele)-phospho-L-histidyl/O-phospho-L-threonyl-[pyruvate, phosphate dikinase] + phosphate + H(+) = N(tele)-phospho-L-histidyl/L-threonyl-[pyruvate, phosphate dikinase] + diphosphate. Its function is as follows. Bifunctional serine/threonine kinase and phosphorylase involved in the regulation of the pyruvate, phosphate dikinase (PPDK) by catalyzing its phosphorylation/dephosphorylation. This is Putative pyruvate, phosphate dikinase regulatory protein from Alkaliphilus metalliredigens (strain QYMF).